Consider the following 84-residue polypeptide: Large ribosomal subunit protein bL27 (84 aa).

The protein belongs to the bacterial ribosomal protein bL27 family.

The polypeptide is Large ribosomal subunit protein bL27 (Kocuria rhizophila (strain ATCC 9341 / DSM 348 / NBRC 103217 / DC2201)).